The sequence spans 136 residues: Transcription antitermination protein NusB (136 aa).

This sequence belongs to the NusB family.

Functionally, involved in transcription antitermination. Required for transcription of ribosomal RNA (rRNA) genes. Binds specifically to the boxA antiterminator sequence of the ribosomal RNA (rrn) operons. The protein is Transcription antitermination protein NusB of Salinispora arenicola (strain CNS-205).